A 199-amino-acid polypeptide reads, in one-letter code: Small ribosomal subunit protein uS4 (199 aa).

An S4 RNA-binding domain is found at Ala91–Ala153.

The protein belongs to the universal ribosomal protein uS4 family. As to quaternary structure, part of the 30S ribosomal subunit. Contacts protein S5. The interaction surface between S4 and S5 is involved in control of translational fidelity.

Its function is as follows. One of the primary rRNA binding proteins, it binds directly to 16S rRNA where it nucleates assembly of the body of the 30S subunit. In terms of biological role, with S5 and S12 plays an important role in translational accuracy. This Exiguobacterium sibiricum (strain DSM 17290 / CCUG 55495 / CIP 109462 / JCM 13490 / 255-15) protein is Small ribosomal subunit protein uS4.